The following is a 110-amino-acid chain: Insulin (110 aa).

Residues Met1–Ala24 form the signal peptide. Intrachain disulfides connect Cys31–Cys96, Cys43–Cys109, and Cys95–Cys100. The propeptide at Glu57–Gln87 is c peptide.

The protein belongs to the insulin family. As to quaternary structure, heterodimer of a B chain and an A chain linked by two disulfide bonds.

Its subcellular location is the secreted. Insulin decreases blood glucose concentration. It increases cell permeability to monosaccharides, amino acids and fatty acids. It accelerates glycolysis, the pentose phosphate cycle, and glycogen synthesis in liver. This is Insulin (INS) from Canis lupus familiaris (Dog).